A 698-amino-acid chain; its full sequence is Probable xyloglucan glycosyltransferase 2 (698 aa).

Transmembrane regions (helical) follow at residues 124-144 and 190-210; these read GFLA…WNGW and ILLF…CFWI. The active site involves D272. Substrate-binding residues include D331 and D333. D425 is a catalytic residue. Transmembrane regions (helical) follow at residues 503-523, 528-548, 653-668, and 673-693; these read LILP…TMFV, LPVW…ILPS, LALS…RSLL, and IHFY…LDLI.

It belongs to the glycosyltransferase 2 family. Plant cellulose synthase-like C subfamily.

The protein resides in the golgi apparatus membrane. Probable beta-1,4-glucan synthase rather involved in the synthesis of the xyloglucan backbone than cellulose. Seems to work simultaneously with xyloglucan 6-xylosyltransferase. Xyloglucan is a noncellulosic polysaccharides of plant cell wall and consists of a glucan backbone substituted by xylose, galactose and fucose. The chain is Probable xyloglucan glycosyltransferase 2 (CSLC2) from Oryza sativa subsp. indica (Rice).